The primary structure comprises 262 residues: Matrix protein (262 aa).

A disordered region spans residues Pro219 to Thr243.

Belongs to the nucleorhabdovirus type-1 matrix protein family. Homomultimer. Interacts with nucleoprotein and with the cytoplasmic domain of glycoprotein.

It localises to the virion membrane. Its subcellular location is the host endomembrane system. Its function is as follows. Plays a major role in assembly and budding of virion. Completely covers the ribonucleoprotein coil and keep it in condensed bullet-shaped form. Inhibits viral transcription and stimulates replication. The polypeptide is Matrix protein (M) (Rice yellow stunt virus (RYSV)).